Consider the following 200-residue polypeptide: Large ribosomal subunit protein uL29 (200 aa).

The tract at residues 1-107 is large ribosomal subunit protein uL29; sequence MTIAKELKQK…KQETKKAEVK (107 aa). Positions 92 to 200 are disordered; sequence STKPESKQET…KMIKTKEKKQ (109 aa). Positions 93–179 are enriched in basic and acidic residues; that stretch reads TKPESKQETK…QEVKKVEAKK (87 aa). A unknown region spans residues 108 to 200; that stretch reads PKVESKPESK…KMIKTKEKKQ (93 aa). Over residues 186–200 the composition is skewed to basic residues; the sequence is KPVKAKMIKTKEKKQ.

Belongs to the universal ribosomal protein uL29 family.

This is Large ribosomal subunit protein uL29 from Mycoplasma genitalium (strain ATCC 33530 / DSM 19775 / NCTC 10195 / G37) (Mycoplasmoides genitalium).